A 214-amino-acid chain; its full sequence is Lazarillo protein (214 aa).

Residues 1 to 21 form the signal peptide; sequence MIRRGLLSVTAALVLLSVSCS. N-linked (GlcNAc...) asparagine glycosylation is found at Asn38, Asn74, Asn84, Asn90, Asn130, Asn158, and Asn161. Ala192 carries GPI-anchor amidated alanine lipidation. The propeptide at 193 to 214 is removed in mature form; it reads GAEHVVGAMLSVAIASLFALLH.

It belongs to the calycin superfamily. Lipocalin family. In terms of processing, N-glycosylated. Post-translationally, contains disulfide bonds. Expressed by a subset of neuroblasts, ganglion mother cells and neurons of the CNS; by all sensory neurons of the PNS.

Its subcellular location is the cell membrane. Putative role in axonal outgrowth and guidance, required for the navigation of identified commissural neurons. Could be a receptor the midline morphogen. The polypeptide is Lazarillo protein (Schistocerca americana (American grasshopper)).